We begin with the raw amino-acid sequence, 743 residues long: Polyribonucleotide nucleotidyltransferase (743 aa).

Aspartate 494 and aspartate 500 together coordinate Mg(2+). The region spanning 561-620 (PQHAEVFVNPDIIRLIIGPGGKNIKAITAATGASVDIEDSGRVSIFAPTAEALEKAREMV) is the KH domain. The S1 motif domain occupies 630–704 (GKNYNAKVRK…SRKAVLLEEQ (75 aa)). The tract at residues 702 to 743 (EEQGHPWNPEDTARPQRSDRGDRGDRRGDRGGRDRRDRGDRR) is disordered. Over residues 712–743 (DTARPQRSDRGDRGDRRGDRGGRDRRDRGDRR) the composition is skewed to basic and acidic residues.

This sequence belongs to the polyribonucleotide nucleotidyltransferase family. Mg(2+) is required as a cofactor.

It localises to the cytoplasm. It carries out the reaction RNA(n+1) + phosphate = RNA(n) + a ribonucleoside 5'-diphosphate. Involved in mRNA degradation. Catalyzes the phosphorolysis of single-stranded polyribonucleotides processively in the 3'- to 5'-direction. In Desulfovibrio desulfuricans (strain ATCC 27774 / DSM 6949 / MB), this protein is Polyribonucleotide nucleotidyltransferase.